Consider the following 338-residue polypeptide: Sporulation-specific protein 4 (338 aa).

A disordered region spans residues 14-37 (QEENKNFLHKNTNEPNEMEQSQTQ). Residues 22–37 (HKNTNEPNEMEQSQTQ) are compositionally biased toward polar residues.

Its function is as follows. Not essential for sporulation. Might be a component of the cell wall. In Saccharomyces cerevisiae (strain ATCC 204508 / S288c) (Baker's yeast), this protein is Sporulation-specific protein 4 (SPS4).